Here is a 141-residue protein sequence, read N- to C-terminus: Hemoglobin subunit alpha (141 aa).

The Globin domain occupies valine 1–arginine 141. Residue serine 3 is modified to Phosphoserine. Lysine 7 carries the post-translational modification N6-succinyllysine. Threonine 8 bears the Phosphothreonine mark. Lysine 11 is subject to N6-succinyllysine. N6-acetyllysine; alternate is present on lysine 16. Residue lysine 16 is modified to N6-succinyllysine; alternate. Tyrosine 24 carries the phosphotyrosine modification. Serine 35 is modified (phosphoserine). Position 40 is an N6-succinyllysine (lysine 40). Serine 49 carries the phosphoserine modification. Histidine 58 provides a ligand contact to O2. Histidine 87 serves as a coordination point for heme b. Serine 102 is subject to Phosphoserine. Residue threonine 108 is modified to Phosphothreonine. Serine 124 carries the post-translational modification Phosphoserine. 2 positions are modified to phosphothreonine: threonine 134 and threonine 137. At serine 138 the chain carries Phosphoserine.

It belongs to the globin family. Heterotetramer of two alpha chains and two beta chains. Red blood cells.

Its function is as follows. Involved in oxygen transport from the lung to the various peripheral tissues. Functionally, hemopressin acts as an antagonist peptide of the cannabinoid receptor CNR1. Hemopressin-binding efficiently blocks cannabinoid receptor CNR1 and subsequent signaling. This Canis lupus familiaris (Dog) protein is Hemoglobin subunit alpha (HBA).